A 162-amino-acid polypeptide reads, in one-letter code: Larval cuticle protein F1 (162 aa).

4 consecutive repeat copies span residues 27–30 (AAPV), 43–46 (AAPV), 59–62 (AAPV), and 75–78 (AAPA).

Component of the larval cuticle. This Tenebrio molitor (Yellow mealworm beetle) protein is Larval cuticle protein F1.